The primary structure comprises 92 residues: Defensin alpha 4 (92 aa).

A signal peptide spans 1–19; the sequence is MKTLVLLSALVLLAFQVQA. A propeptide spanning residues 20–58 is cleaved from the precursor; the sequence is DPIQNTDEETKTEEQPGEEDQAVSISFGGQEGSALHEKS. The segment at 23–42 is disordered; sequence QNTDEETKTEEQPGEEDQAV. Cystine bridges form between C64-C89, C66-C81, and C71-C88.

It belongs to the alpha-defensin family. As to expression, paneth cells of the small bowel.

It localises to the secreted. Its subcellular location is the cytoplasmic vesicle. The protein localises to the secretory vesicle. Functionally, host-defense peptide that has antimicrobial activity. Exhibits activity against Gram-negative E.coli (in vitro). Probably contributes to the antimicrobial barrier function of the small bowel mucosa. This is Defensin alpha 4 from Mus musculus (Mouse).